Consider the following 424-residue polypeptide: Methylthioribose-1-phosphate isomerase (424 aa).

The active-site Proton donor is the D281.

The protein belongs to the eIF-2B alpha/beta/delta subunits family. MtnA subfamily.

It localises to the cytoplasm. The protein resides in the nucleus. It catalyses the reaction 5-(methylsulfanyl)-alpha-D-ribose 1-phosphate = 5-(methylsulfanyl)-D-ribulose 1-phosphate. It functions in the pathway amino-acid biosynthesis; L-methionine biosynthesis via salvage pathway; L-methionine from S-methyl-5-thio-alpha-D-ribose 1-phosphate: step 1/6. In terms of biological role, catalyzes the interconversion of methylthioribose-1-phosphate (MTR-1-P) into methylthioribulose-1-phosphate (MTRu-1-P). This Candida dubliniensis (strain CD36 / ATCC MYA-646 / CBS 7987 / NCPF 3949 / NRRL Y-17841) (Yeast) protein is Methylthioribose-1-phosphate isomerase.